A 370-amino-acid chain; its full sequence is Small ribosomal subunit biogenesis GTPase RsgA (370 aa).

The CP-type G domain occupies Q97 to P255. GTP-binding positions include N146–D149 and G197–S205. Positions 280, 285, 287, and 293 each coordinate Zn(2+). The tract at residues T328–E370 is disordered.

The protein belongs to the TRAFAC class YlqF/YawG GTPase family. RsgA subfamily. As to quaternary structure, monomer. Associates with 30S ribosomal subunit, binds 16S rRNA. Zn(2+) is required as a cofactor.

Its subcellular location is the cytoplasm. One of several proteins that assist in the late maturation steps of the functional core of the 30S ribosomal subunit. Helps release RbfA from mature subunits. May play a role in the assembly of ribosomal proteins into the subunit. Circularly permuted GTPase that catalyzes slow GTP hydrolysis, GTPase activity is stimulated by the 30S ribosomal subunit. In Trichormus variabilis (strain ATCC 29413 / PCC 7937) (Anabaena variabilis), this protein is Small ribosomal subunit biogenesis GTPase RsgA.